The sequence spans 200 residues: LexA repressor (200 aa).

Positions 28–48 form a DNA-binding region, H-T-H motif; it reads RAEIAEILGFKSANAAEEHLK. Catalysis depends on for autocatalytic cleavage activity residues Ser118 and Lys155.

It belongs to the peptidase S24 family. In terms of assembly, homodimer.

The catalysed reaction is Hydrolysis of Ala-|-Gly bond in repressor LexA.. In terms of biological role, represses a number of genes involved in the response to DNA damage (SOS response), including recA and lexA. In the presence of single-stranded DNA, RecA interacts with LexA causing an autocatalytic cleavage which disrupts the DNA-binding part of LexA, leading to derepression of the SOS regulon and eventually DNA repair. The sequence is that of LexA repressor from Teredinibacter turnerae (strain ATCC 39867 / T7901).